A 274-amino-acid polypeptide reads, in one-letter code: Large ribosomal subunit protein uL2 (274 aa).

The tract at residues 224–256 is disordered; sequence VMNPVDHPHGGGEGKTGEGRHPVDPWGNLTKGY. The span at 229–246 shows a compositional bias: basic and acidic residues; the sequence is DHPHGGGEGKTGEGRHPV.

The protein belongs to the universal ribosomal protein uL2 family. In terms of assembly, part of the 50S ribosomal subunit. Forms a bridge to the 30S subunit in the 70S ribosome.

Its function is as follows. One of the primary rRNA binding proteins. Required for association of the 30S and 50S subunits to form the 70S ribosome, for tRNA binding and peptide bond formation. It has been suggested to have peptidyltransferase activity; this is somewhat controversial. Makes several contacts with the 16S rRNA in the 70S ribosome. The chain is Large ribosomal subunit protein uL2 from Polaromonas naphthalenivorans (strain CJ2).